The sequence spans 166 residues: Large ribosomal subunit protein uL10 (166 aa).

Belongs to the universal ribosomal protein uL10 family. As to quaternary structure, part of the ribosomal stalk of the 50S ribosomal subunit. The N-terminus interacts with L11 and the large rRNA to form the base of the stalk. The C-terminus forms an elongated spine to which L12 dimers bind in a sequential fashion forming a multimeric L10(L12)X complex.

In terms of biological role, forms part of the ribosomal stalk, playing a central role in the interaction of the ribosome with GTP-bound translation factors. This chain is Large ribosomal subunit protein uL10, found in Geobacillus sp. (strain WCH70).